Here is a 655-residue protein sequence, read N- to C-terminus: Phosphatidylinositol-3,5-bisphosphate 3-phosphatase MTMR6 (655 aa).

One can recognise a GRAM domain in the interval 1 to 101; that stretch reads MEHIRTTKVE…YNSLLQLSKQ (101 aa). The interaction with RAB1B stretch occupies residues 2–141; the sequence is EHIRTTKVEQ…AEYERMGVPN (140 aa). Y108 bears the Phosphotyrosine mark. Residues 124–537 form the Myotubularin phosphatase domain; the sequence is GWQLIDLAAE…FNFKFWRNMY (414 aa). Positions 286, 311, and 312 each coordinate a 1,2-diacyl-sn-glycero-3-phospho-(1D-myo-inositol-3,5-bisphosphate). A 1,2-diacyl-sn-glycero-3-phospho-(1D-myo-inositol-3-phosphate) is bound by residues N286, N311, and I312. The active-site Phosphocysteine intermediate is the C374. S375, D376, G377, W378, D379, R380, K416, and R420 together coordinate a 1,2-diacyl-sn-glycero-3-phospho-(1D-myo-inositol-3,5-bisphosphate). Residues S375, D376, G377, W378, D379, and R380 each coordinate a 1,2-diacyl-sn-glycero-3-phospho-(1D-myo-inositol-3-phosphate). R420 contributes to the a 1,2-diacyl-sn-glycero-3-phospho-(1D-myo-inositol-3-phosphate) binding site. Residues 547 to 581 adopt a coiled-coil conformation; sequence RQSVLNIIMNMNEQNKQLEEDVKDLEAKIKQCKSG. Residues S595, S623, and S645 each carry the phosphoserine modification.

The protein belongs to the protein-tyrosine phosphatase family. Non-receptor class myotubularin subfamily. In terms of assembly, homodimer. Heterodimer (via C-terminus) with MTMR9 (via C-terminus). Interacts with ALKBH4. Interacts with KCNN4. Interacts (via GRAM domain) with RAB1B (in GDP-bound form); the interaction regulates MTMR6 recruitment to the endoplasmic reticulum-Golgi intermediate compartment.

It is found in the cytoplasm. Its subcellular location is the endoplasmic reticulum. It localises to the cell projection. The protein localises to the ruffle membrane. The protein resides in the endoplasmic reticulum-Golgi intermediate compartment. It is found in the perinuclear region. It carries out the reaction a 1,2-diacyl-sn-glycero-3-phospho-(1D-myo-inositol-3,5-bisphosphate) + H2O = a 1,2-diacyl-sn-glycero-3-phospho-(1D-myo-inositol-5-phosphate) + phosphate. It catalyses the reaction a 1,2-diacyl-sn-glycero-3-phospho-(1D-myo-inositol-3-phosphate) + H2O = a 1,2-diacyl-sn-glycero-3-phospho-(1D-myo-inositol) + phosphate. The enzyme catalyses 1,2-dioctanoyl-sn-glycero-3-phospho-(1D-myo-inositol-3,5-bisphosphate) + H2O = 1,2-dioctanoyl-sn-glycero-3-phospho-(1D-myo-inositol-5-phosphate) + phosphate. The catalysed reaction is 1,2-dioctanoyl-sn-glycero-3-phospho-(1-D-myo-inositol-3-phosphate) + H2O = 1,2-dioctanoyl-sn-glycero-3-phospho-(1D-myo-inositol) + phosphate. With respect to regulation, allosterically activated by phosphatidylserine and/or phosphatidylinositol 4-phosphate (PtdIns(4)P), and phosphatidylinositol 5-phosphate (PtdIns(5)P). Interaction with MTMR9 increases catalytic activity towards phosphatidylinositol 3,5-bisphosphate. Functionally, lipid phosphatase that specifically dephosphorylates the D-3 position of phosphatidylinositol 3-phosphate and phosphatidylinositol 3,5-bisphosphate, generating phosphatidylinositol and phosphatidylinositol 5-phosphate. Binds with high affinity to phosphatidylinositol 3,5-bisphosphate (PtdIns(3,5)P2) but also to phosphatidylinositol 3-phosphate (PtdIns(3)P), phosphatidylinositol 4-phosphate (PtdIns(4)P), and phosphatidylinositol 5-phosphate (PtdIns(5)P), phosphatidic acid and phosphatidylserine. Negatively regulates ER-Golgi protein transport. Probably in association with MTMR9, plays a role in the late stages of macropinocytosis by dephosphorylating phosphatidylinositol 3-phosphate in membrane ruffles. Acts as a negative regulator of KCNN4/KCa3.1 channel activity in CD4(+) T-cells possibly by decreasing intracellular levels of phosphatidylinositol 3-phosphate. Negatively regulates proliferation of reactivated CD4(+) T-cells. In complex with MTMR9, negatively regulates DNA damage-induced apoptosis. The formation of the MTMR6-MTMR9 complex stabilizes both MTMR6 and MTMR9 protein levels. This Rattus norvegicus (Rat) protein is Phosphatidylinositol-3,5-bisphosphate 3-phosphatase MTMR6.